We begin with the raw amino-acid sequence, 558 residues long: Urocanate hydratase (558 aa).

NAD(+) is bound by residues G54–G55, Q132, G178–G180, E198, N244–A245, Q265–H269, Y275–L276, and Y324. C412 is a catalytic residue. G494 serves as a coordination point for NAD(+).

It belongs to the urocanase family. Requires NAD(+) as cofactor.

It is found in the cytoplasm. It catalyses the reaction 4-imidazolone-5-propanoate = trans-urocanate + H2O. It functions in the pathway amino-acid degradation; L-histidine degradation into L-glutamate; N-formimidoyl-L-glutamate from L-histidine: step 2/3. In terms of biological role, catalyzes the conversion of urocanate to 4-imidazolone-5-propionate. The sequence is that of Urocanate hydratase from Acinetobacter baumannii (strain AB307-0294).